The primary structure comprises 405 residues: Phosphatidylinositol 5-phosphate 4-kinase type-2 alpha (405 aa).

A PIPK domain is found at 32–404 (ASDPLLSVLM…RFLDFIANIL (373 aa)). The interval 287 to 326 (QEEVECEENDGEDEGESDGTHPIGTPPDSPGNTLNSSLPL) is disordered. Residues 288 to 303 (EEVECEENDGEDEGES) are compositionally biased toward acidic residues.

As to quaternary structure, homodimer. Post-translationally, phosphorylated in tyrosines. Phosphorylation is induced by light and increases kinase activity.

The protein resides in the cell membrane. It is found in the nucleus. The protein localises to the lysosome. It localises to the cytoplasm. The catalysed reaction is a 1,2-diacyl-sn-glycero-3-phospho-(1D-myo-inositol-5-phosphate) + ATP = a 1,2-diacyl-sn-glycero-3-phospho-(1D-myo-inositol-4,5-bisphosphate) + ADP + H(+). The enzyme catalyses 1,2-dihexadecanoyl-sn-glycero-3-phospho-(1D-myo-inositol-5-phosphate) + ATP = 1,2-dihexadecanoyl-sn-glycero-3-phospho-(1D-myo-inositol-4,5-bisphosphate) + ADP + H(+). It carries out the reaction 1,2-dihexadecanoyl-sn-glycero-3-phospho-(1D-myo-inositol-5-phosphate) + GTP = 1,2-dihexadecanoyl-sn-glycero-3-phospho-(1D-myo-inositol-4,5-bisphosphate) + GDP + H(+). With respect to regulation, in rod outer segments, activated by light. Its function is as follows. Catalyzes the phosphorylation of phosphatidylinositol 5-phosphate (PtdIns5P) on the fourth hydroxyl of the myo-inositol ring, to form phosphatidylinositol 4,5-bisphosphate (PtdIns(4,5)P2). Has both ATP- and GTP-dependent kinase activities. The chain is Phosphatidylinositol 5-phosphate 4-kinase type-2 alpha (PIP4K2A) from Gallus gallus (Chicken).